Here is a 582-residue protein sequence, read N- to C-terminus: MAVPGVGLLTRLNLCARRRTRVQRPIVRLLSCPGTVAKDLRRDEQPSGSVETGFEDKIPKRRFSEMQNERREQAQRTVLIHCPEKISENKFLKYLSQFGPINNHFFYESFGLYAVVEFCQKESIGSLQNGTHTPSTAMETAIPFRSRFFNLKLKNQTSERSRVRSSNQLPRSNKQLFELLCYAESIDDQLNTLLKEFQLTEENTKLRYLTCSLIEDMAAAYFPDCIVRPFGSSVNTFGKLGCDLDMFLDLDETRNLSAHKISGNFLMEFQVKNVPSERIATQKILSVLGECLDHFGPGCVGVQKILNARCPLVRFSHQASGFQCDLTTNNRIALTSSELLYIYGALDSRVRALVFSVRCWARAHSLTSSIPGAWITNFSLTMMVIFFLQRRSPPILPTLDSLKTLADAEDKCVIEGNNCTFVRDLSRIKPSQNTETLELLLKEFFEYFGNFAFDKNSINIRQGREQNKPDSSPLYIQNPFETSLNISKNVSQSQLQKFVDLARESAWILQQEDTDRPSISSNRPWGLVSLLLPSAPNRKSFTKKKSNKFAIETVKNLLESLKGNRTENFTKTSGKRTISTQT.

The N-terminal 37 residues, 1-37, are a transit peptide targeting the mitochondrion; that stretch reads MAVPGVGLLTRLNLCARRRTRVQRPIVRLLSCPGTVA. Lys90 is modified (N6-acetyllysine). ATP is bound by residues 107-109 and 241-242; these read YES and GC. Mg(2+) is bound by residues Asp243 and Asp245. The 47-residue stretch at 437–483 folds into the PAP-associated domain; the sequence is LELLLKEFFEYFGNFAFDKNSINIRQGREQNKPDSSPLYIQNPFETS.

Belongs to the DNA polymerase type-B-like family. As to quaternary structure, homodimer. Mg(2+) is required as a cofactor. It depends on Mn(2+) as a cofactor. In terms of tissue distribution, ubiquitous, with stronger expression in tissues with high energy requirements: heart, brain, and skeletal muscle.

The protein resides in the cytoplasm. It is found in the mitochondrion. It catalyses the reaction RNA(n) + ATP = RNA(n)-3'-adenine ribonucleotide + diphosphate. Polymerase that creates the 3' poly(A) tail of mitochondrial transcripts. Can use all four nucleotides, but has higher activity with ATP and UTP (in vitro). Plays a role in replication-dependent histone mRNA degradation. May be involved in the terminal uridylation of mature histone mRNAs before their degradation is initiated. Might be responsible for the creation of some UAA stop codons which are not encoded in mtDNA. In Homo sapiens (Human), this protein is Poly(A) RNA polymerase, mitochondrial (MTPAP).